The following is a 172-amino-acid chain: MSYNCCSGNFSSRSCGGYLHYPASSCGFSYPSNQVYSTDLCSPSTCQLGSSLYRGCQQTCWEPTSCQTSYVESSPCQTSCYRPRTSLLCSPCQTTYSGSLGFGSSSCRSLGYGSRSCYSVGCGSSGFRSLGYGGCGFPSLGYGVGFCRPTYLASRSCQSSCYRPTCGSGFYY.

5 consecutive repeat copies span residues 46–55 (CQLGSSLYRG), 56–65 (CQQTCWEPTS), 66–75 (CQTSYVESSP), 76–85 (CQTSCYRPRT), and 92–101 (CQTTYSGSLG). The 5 X 10 AA approximate repeats stretch occupies residues 46-101 (CQLGSSLYRGCQQTCWEPTSCQTSYVESSPCQTSCYRPRTSLLCSPCQTTYSGSLG).

The protein belongs to the PMG family. In terms of assembly, interacts with hair keratins. Weak expression seen in the late matrix and entire cortex area of the hair follicle.

Functionally, in the hair cortex, hair keratin intermediate filaments are embedded in an interfilamentous matrix, consisting of hair keratin-associated proteins (KRTAP), which are essential for the formation of a rigid and resistant hair shaft through their extensive disulfide bond cross-linking with abundant cysteine residues of hair keratins. The matrix proteins include the high-sulfur and high-glycine-tyrosine keratins. This is Keratin-associated protein 13-1 (KRTAP13-1) from Homo sapiens (Human).